The chain runs to 689 residues: Glycine--tRNA ligase beta subunit (689 aa).

This sequence belongs to the class-II aminoacyl-tRNA synthetase family. Tetramer of two alpha and two beta subunits.

The protein localises to the cytoplasm. The catalysed reaction is tRNA(Gly) + glycine + ATP = glycyl-tRNA(Gly) + AMP + diphosphate. The chain is Glycine--tRNA ligase beta subunit from Aeromonas hydrophila subsp. hydrophila (strain ATCC 7966 / DSM 30187 / BCRC 13018 / CCUG 14551 / JCM 1027 / KCTC 2358 / NCIMB 9240 / NCTC 8049).